Here is a 503-residue protein sequence, read N- to C-terminus: Angiopoietin-4 (503 aa).

The first 24 residues, 1–24 (MLSQLAMLQGSLLLVVATMSVAQQ), serve as a signal peptide directing secretion. Positions 84-238 (TQQVKQLEQA…RQSAALTNIE (155 aa)) form a coiled coil. N-linked (GlcNAc...) asparagine glycosylation is found at Asn96, Asn126, Asn140, Asn158, Asn247, Asn274, Asn311, Asn337, and Asn427. In terms of domain architecture, Fibrinogen C-terminal spans 282-502 (MAGEQVFQDC…ASRMMIRPLD (221 aa)). The cysteines at positions 291 and 320 are disulfide-linked. Cys444 and Cys457 are disulfide-bonded.

In terms of assembly, homodimer; disulfide-linked. Interacts with TEK/TIE2. As to expression, highly expressed in the lung with much lower levels found in other tissues.

It is found in the secreted. Functionally, binds to TEK/TIE2, modulating ANGPT1 signaling. Can induce tyrosine phosphorylation of TEK/TIE2. Promotes endothelial cell survival, migration and angiogenesis. This Homo sapiens (Human) protein is Angiopoietin-4 (ANGPT4).